Reading from the N-terminus, the 592-residue chain is Tetrathionate sensor histidine kinase TtrS (592 aa).

The next 2 membrane-spanning stretches (helical) occupy residues valine 11–isoleucine 31 and valine 307–leucine 327. A Histidine kinase domain is found at glycine 364–asparagine 581. A Phosphohistidine; by autocatalysis modification is found at histidine 367.

In terms of processing, autophosphorylated.

The protein localises to the cell inner membrane. The catalysed reaction is ATP + protein L-histidine = ADP + protein N-phospho-L-histidine.. Functionally, member of the two-component regulatory system TtrR/TtrS, which is required for synthesis of tetrathionate reductase. Probably functions as a sensor protein kinase which is autophosphorylated at a histidine residue in response to tetrathionate, and transfers its phosphate group to TtrR. During mice infection, the ability to use tetrathionate as an electron acceptor is a growth advantage for S.typhimurium over the competing microbiota in the lumen of the inflamed gut. This is Tetrathionate sensor histidine kinase TtrS (ttrS) from Salmonella typhimurium (strain LT2 / SGSC1412 / ATCC 700720).